The sequence spans 228 residues: Thiamine-phosphate synthase (228 aa).

Residues 57 to 61 and asparagine 89 contribute to the 4-amino-2-methyl-5-(diphosphooxymethyl)pyrimidine site; that span reads QLRDK. Positions 90 and 109 each coordinate Mg(2+). Serine 128 is a 4-amino-2-methyl-5-(diphosphooxymethyl)pyrimidine binding site. Residue 154–156 coordinates 2-[(2R,5Z)-2-carboxy-4-methylthiazol-5(2H)-ylidene]ethyl phosphate; it reads TPS. Position 157 (lysine 157) interacts with 4-amino-2-methyl-5-(diphosphooxymethyl)pyrimidine. Residues glycine 185 and 205 to 206 each bind 2-[(2R,5Z)-2-carboxy-4-methylthiazol-5(2H)-ylidene]ethyl phosphate; that span reads IS.

It belongs to the thiamine-phosphate synthase family. Mg(2+) is required as a cofactor.

The catalysed reaction is 2-[(2R,5Z)-2-carboxy-4-methylthiazol-5(2H)-ylidene]ethyl phosphate + 4-amino-2-methyl-5-(diphosphooxymethyl)pyrimidine + 2 H(+) = thiamine phosphate + CO2 + diphosphate. It catalyses the reaction 2-(2-carboxy-4-methylthiazol-5-yl)ethyl phosphate + 4-amino-2-methyl-5-(diphosphooxymethyl)pyrimidine + 2 H(+) = thiamine phosphate + CO2 + diphosphate. It carries out the reaction 4-methyl-5-(2-phosphooxyethyl)-thiazole + 4-amino-2-methyl-5-(diphosphooxymethyl)pyrimidine + H(+) = thiamine phosphate + diphosphate. It functions in the pathway cofactor biosynthesis; thiamine diphosphate biosynthesis; thiamine phosphate from 4-amino-2-methyl-5-diphosphomethylpyrimidine and 4-methyl-5-(2-phosphoethyl)-thiazole: step 1/1. Its function is as follows. Condenses 4-methyl-5-(beta-hydroxyethyl)thiazole monophosphate (THZ-P) and 2-methyl-4-amino-5-hydroxymethyl pyrimidine pyrophosphate (HMP-PP) to form thiamine monophosphate (TMP). In Roseiflexus castenholzii (strain DSM 13941 / HLO8), this protein is Thiamine-phosphate synthase.